A 61-amino-acid chain; its full sequence is Large ribosomal subunit protein uL30 (61 aa).

Belongs to the universal ribosomal protein uL30 family. As to quaternary structure, part of the 50S ribosomal subunit.

In Dichelobacter nodosus (strain VCS1703A), this protein is Large ribosomal subunit protein uL30.